We begin with the raw amino-acid sequence, 488 residues long: Ribulose bisphosphate carboxylase large chain (488 aa).

Positions 128 and 178 each coordinate substrate. Lys-180 serves as the catalytic Proton acceptor. Lys-182 contributes to the substrate binding site. Residues Lys-206, Asp-208, and Glu-209 each coordinate Mg(2+). Lys-206 is modified (N6-carboxylysine). His-298 functions as the Proton acceptor in the catalytic mechanism. Substrate contacts are provided by Arg-299, His-331, and Ser-383.

Belongs to the RuBisCO large chain family. Type I subfamily. Heterohexadecamer of 8 large chains and 8 small chains. It depends on Mg(2+) as a cofactor.

It catalyses the reaction 2 (2R)-3-phosphoglycerate + 2 H(+) = D-ribulose 1,5-bisphosphate + CO2 + H2O. The catalysed reaction is D-ribulose 1,5-bisphosphate + O2 = 2-phosphoglycolate + (2R)-3-phosphoglycerate + 2 H(+). RuBisCO catalyzes two reactions: the carboxylation of D-ribulose 1,5-bisphosphate, the primary event in carbon dioxide fixation, as well as the oxidative fragmentation of the pentose substrate. Both reactions occur simultaneously and in competition at the same active site. The polypeptide is Ribulose bisphosphate carboxylase large chain (Xanthobacter flavus).